The sequence spans 162 residues: Small ribosomal subunit protein uS9 (162 aa).

Belongs to the universal ribosomal protein uS9 family.

This Parvibaculum lavamentivorans (strain DS-1 / DSM 13023 / NCIMB 13966) protein is Small ribosomal subunit protein uS9.